A 426-amino-acid chain; its full sequence is UDP-N-acetylglucosamine 1-carboxyvinyltransferase (426 aa).

22–23 (KN) serves as a coordination point for phosphoenolpyruvate. Arginine 93 is a UDP-N-acetyl-alpha-D-glucosamine binding site. Catalysis depends on aspartate 117, which acts as the Proton donor. UDP-N-acetyl-alpha-D-glucosamine contacts are provided by aspartate 312 and methionine 334.

This sequence belongs to the EPSP synthase family. MurA subfamily.

The protein resides in the cytoplasm. The catalysed reaction is phosphoenolpyruvate + UDP-N-acetyl-alpha-D-glucosamine = UDP-N-acetyl-3-O-(1-carboxyvinyl)-alpha-D-glucosamine + phosphate. Its pathway is cell wall biogenesis; peptidoglycan biosynthesis. In terms of biological role, cell wall formation. Adds enolpyruvyl to UDP-N-acetylglucosamine. The protein is UDP-N-acetylglucosamine 1-carboxyvinyltransferase of Treponema denticola (strain ATCC 35405 / DSM 14222 / CIP 103919 / JCM 8153 / KCTC 15104).